Consider the following 359-residue polypeptide: 4'-phosphopantetheinyl transferase A (359 aa).

The protein belongs to the P-Pant transferase superfamily.

It catalyses the reaction apo-[ACP] + CoA = holo-[ACP] + adenosine 3',5'-bisphosphate + H(+). Activity is inhibited bythe antifunfal copmpounds PD 404,182, 6-nitroso-1,2-benzopyrone, and calmidazolium chloride with IC(50) values of 3.9 uM, 35.2 uM, and 19.2 uM, respectively. Acyl-carrier-protein synthase that transfers the 4'-phosphopantetheine moiety from coenzyme A to a Ser of an acyl-carrier-protein. The 4'-phosphopantetheine (4'-PPT) portion of CoA provides the essential prosthetic group for a number of carrier proteins and multi-domain enzymes, priming them for the acceptance of acyl building blocks in fatty acid synthesis and many aspects of secondary metabolism mediated by polyketide synthases (PKSs) and non-ribosomal peptide synthetases (NRPSs). PptA is able to transfer the cofactor to a broad range of enzymes with acyl- or peptidyl-carrier protein domains and activates target enzymes involved in the synthesis of lysine, but also secondary metabolites including gliotoxin, fumigaclavine C, fumiquinazole A, fumiquinazoline C, pyripyroprene A, fumagillin, the siderophores triacetylfusarinine C (TAFC) and ferricrocin (FC), and dihydroxy naphthalene (DHN)-melanin. Plays an essential role in virulence. In Aspergillus fumigatus (strain ATCC MYA-4609 / CBS 101355 / FGSC A1100 / Af293) (Neosartorya fumigata), this protein is 4'-phosphopantetheinyl transferase A.